The sequence spans 254 residues: Phosphonates import ATP-binding protein PhnC (254 aa).

Residues 2-246 (IQLKNVSKIY…VFDDIYNGGN (245 aa)) enclose the ABC transporter domain. 35 to 42 (GLSGAGKS) is an ATP binding site.

The protein belongs to the ABC transporter superfamily. Phosphonates importer (TC 3.A.1.9.1) family. The complex is composed of two ATP-binding proteins (PhnC), two transmembrane proteins (PhnE) and a solute-binding protein (PhnD).

The protein localises to the cell membrane. The enzyme catalyses phosphonate(out) + ATP + H2O = phosphonate(in) + ADP + phosphate + H(+). Part of the ABC transporter complex PhnCDE involved in phosphonates import. Responsible for energy coupling to the transport system. This Lactobacillus johnsonii (strain CNCM I-12250 / La1 / NCC 533) protein is Phosphonates import ATP-binding protein PhnC.